The following is a 489-amino-acid chain: Argininosuccinate lyase (489 aa).

The disordered stretch occupies residues 1-20 (MSEPSAAVGQRPGGESAPAH).

Belongs to the lyase 1 family. Argininosuccinate lyase subfamily.

The protein localises to the cytoplasm. It catalyses the reaction 2-(N(omega)-L-arginino)succinate = fumarate + L-arginine. Its pathway is amino-acid biosynthesis; L-arginine biosynthesis; L-arginine from L-ornithine and carbamoyl phosphate: step 3/3. The protein is Argininosuccinate lyase of Acidothermus cellulolyticus (strain ATCC 43068 / DSM 8971 / 11B).